The sequence spans 236 residues: Probable transcriptional regulatory protein UUR10_0292 (236 aa).

It belongs to the TACO1 family.

Its subcellular location is the cytoplasm. In Ureaplasma urealyticum serovar 10 (strain ATCC 33699 / Western), this protein is Probable transcriptional regulatory protein UUR10_0292.